A 319-amino-acid polypeptide reads, in one-letter code: MTTAQSAWGIGLATVTADDQVLDTWYPTGKLGLGELPLVPGEDEADVLDLPPGAVGDRALPGLRTVQLVTVLSSLADPIKDAADAYLRLHLLSHRLVRPNELNLDGIFGKLANVAWTSAGPCPPERVDELRVIERAAGRHLTIYGVDKFPRMTDYVVPSGVRIADADRVRIGAHLASGTTVMHEGFVNFNAGTLGASMVEGRIVQGVVIGDGSDIGGGASIMGTLSGGGTEKVRVGERSLIGANAGVGISLGDDCVVEAGCYITASSKLTLPDGRVVKARELSGVDGLLFWRNSVTGGLEAKPRSGQGIALNAALHAND.

Positions 167 and 184 each coordinate Mg(2+). E200 (acyl-anhydride intermediate) is an active-site residue. Succinyl-CoA contacts are provided by residues R202, G217, S220, A243, E258–A259, and K278.

Belongs to the type 2 tetrahydrodipicolinate N-succinyltransferase family. As to quaternary structure, homotrimer.

The protein resides in the cytoplasm. The enzyme catalyses (S)-2,3,4,5-tetrahydrodipicolinate + succinyl-CoA + H2O = (S)-2-succinylamino-6-oxoheptanedioate + CoA. It functions in the pathway amino-acid biosynthesis; L-lysine biosynthesis via DAP pathway; LL-2,6-diaminopimelate from (S)-tetrahydrodipicolinate (succinylase route): step 1/3. In terms of biological role, catalyzes the conversion of the cyclic tetrahydrodipicolinate (THDP) into the acyclic N-succinyl-L-2-amino-6-oxopimelate using succinyl-CoA. The chain is 2,3,4,5-tetrahydropyridine-2,6-dicarboxylate N-succinyltransferase from Salinispora tropica (strain ATCC BAA-916 / DSM 44818 / JCM 13857 / NBRC 105044 / CNB-440).